The following is a 411-amino-acid chain: Serine--tRNA ligase (411 aa).

Residue 226 to 228 (TSE) participates in L-serine binding. Position 257-259 (257-259 (RKE)) interacts with ATP. Glu-280 serves as a coordination point for L-serine. Position 344–347 (344–347 (EISS)) interacts with ATP. Ser-379 contributes to the L-serine binding site.

The protein belongs to the class-II aminoacyl-tRNA synthetase family. Type-1 seryl-tRNA synthetase subfamily. As to quaternary structure, homodimer. The tRNA molecule binds across the dimer.

The protein resides in the cytoplasm. The enzyme catalyses tRNA(Ser) + L-serine + ATP = L-seryl-tRNA(Ser) + AMP + diphosphate + H(+). The catalysed reaction is tRNA(Sec) + L-serine + ATP = L-seryl-tRNA(Sec) + AMP + diphosphate + H(+). The protein operates within aminoacyl-tRNA biosynthesis; selenocysteinyl-tRNA(Sec) biosynthesis; L-seryl-tRNA(Sec) from L-serine and tRNA(Sec): step 1/1. In terms of biological role, catalyzes the attachment of serine to tRNA(Ser). Is also able to aminoacylate tRNA(Sec) with serine, to form the misacylated tRNA L-seryl-tRNA(Sec), which will be further converted into selenocysteinyl-tRNA(Sec). The chain is Serine--tRNA ligase from Campylobacter jejuni subsp. jejuni serotype O:23/36 (strain 81-176).